The sequence spans 547 residues: Probable protein kinase UbiB (547 aa).

The Protein kinase domain occupies 121–501; that stretch reads EFSPDPMASA…QLRSERRWRR (381 aa). ATP contacts are provided by residues 127–135 and lysine 149; that span reads MASASVAQV. The active-site Proton acceptor is aspartate 284. 2 helical membrane-spanning segments follow: residues 502–522 and 523–543; these read GFIALVLAGAALVGSQPHAGQ and WLADLPVWSWALLAGAAGVML.

The protein belongs to the ABC1 family. UbiB subfamily.

The protein localises to the cell inner membrane. It functions in the pathway cofactor biosynthesis; ubiquinone biosynthesis [regulation]. Functionally, is probably a protein kinase regulator of UbiI activity which is involved in aerobic coenzyme Q (ubiquinone) biosynthesis. In Marinobacter nauticus (strain ATCC 700491 / DSM 11845 / VT8) (Marinobacter aquaeolei), this protein is Probable protein kinase UbiB.